The chain runs to 176 residues: O-acetyl-ADP-ribose deacetylase (176 aa).

The region spanning 1 to 175 is the Macro domain; it reads MSGRINVVQG…LYQRLLGQYD (175 aa). Substrate is bound by residues 11 to 12, asparagine 25, 33 to 35, and 122 to 126; these read DI, GVD, and STGIY. The active-site Proton acceptor is the aspartate 35.

Belongs to the MacroD-type family. YmdB subfamily. Homodimer. Interacts with RNase III.

The catalysed reaction is 3''-O-acetyl-ADP-D-ribose + H2O = ADP-D-ribose + acetate + H(+). The enzyme catalyses 2''-O-acetyl-ADP-D-ribose + H2O = ADP-D-ribose + acetate + H(+). Its function is as follows. Deacetylates O-acetyl-ADP ribose to yield ADP-ribose and free acetate. Down-regulates ribonuclease 3 (RNase III) activity. Acts by interacting directly with the region of the ribonuclease that is required for dimerization/activation. This Cronobacter turicensis (strain DSM 18703 / CCUG 55852 / LMG 23827 / z3032) protein is O-acetyl-ADP-ribose deacetylase.